Reading from the N-terminus, the 429-residue chain is Adenylosuccinate synthetase (429 aa).

GTP-binding positions include Gly12 to Lys18 and Gly40 to Thr42. Catalysis depends on Asp13, which acts as the Proton acceptor. Mg(2+) contacts are provided by Asp13 and Gly40. IMP contacts are provided by residues Asp13–Lys16, Asn38–His41, Thr128, Arg142, Gln224, Thr239, and Arg303. His41 (proton donor) is an active-site residue. Val299 to Arg305 contributes to the substrate binding site. GTP contacts are provided by residues Arg305, Leu331 to Asp333, and Ser413 to Gly415.

It belongs to the adenylosuccinate synthetase family. In terms of assembly, homodimer. Mg(2+) serves as cofactor.

The protein resides in the cytoplasm. The enzyme catalyses IMP + L-aspartate + GTP = N(6)-(1,2-dicarboxyethyl)-AMP + GDP + phosphate + 2 H(+). It functions in the pathway purine metabolism; AMP biosynthesis via de novo pathway; AMP from IMP: step 1/2. Plays an important role in the de novo pathway of purine nucleotide biosynthesis. Catalyzes the first committed step in the biosynthesis of AMP from IMP. The protein is Adenylosuccinate synthetase of Clostridioides difficile (strain 630) (Peptoclostridium difficile).